The primary structure comprises 299 residues: Zinc finger protein 414 (299 aa).

Polar residues-rich tracts occupy residues 1 to 20 (MEEPSRPSSDTLTTVESSSG) and 69 to 81 (DSCQTGSTNTGVG). Positions 1–98 (MEEPSRPSSD…PRRRPPPGKQ (98 aa)) are disordered. 2 consecutive C2H2-type zinc fingers follow at residues 99 to 123 (IPCSSPGCCLSFPSVRDLAQHLRTH) and 135 to 159 (FRCSALSCTESFPSMQELVAHGKLH). Residues 166-190 (FKCENCLLRFRTHRSLFKHLHVCID) form a C2H2-type 3; degenerate zinc finger. Disordered stretches follow at residues 193–228 (QNPAPPPPPALDKEPPVPERPPESDPSSSLGLPFPL) and 254–299 (PRLR…GACR). The segment covering 203-215 (LDKEPPVPERPPE) has biased composition (basic and acidic residues). Low complexity predominate over residues 217 to 228 (DPSSSLGLPFPL).

This sequence belongs to the krueppel C2H2-type zinc-finger protein family.

It localises to the nucleus. May be involved in transcriptional regulation. In Mus musculus (Mouse), this protein is Zinc finger protein 414 (Znf414).